The sequence spans 154 residues: Superoxide dismutase [Cu-Zn] (154 aa).

Positions 47, 49, and 64 each coordinate Cu cation. The cysteines at positions 58 and 147 are disulfide-linked. Zn(2+) contacts are provided by His64, His72, His81, and Asp84. Residue His121 coordinates Cu cation. The span at 124-137 (TDDLGRGDSEESKK) shows a compositional bias: basic and acidic residues. The tract at residues 124 to 144 (TDDLGRGDSEESKKTGNAGAR) is disordered. Arg144 serves as a coordination point for substrate.

This sequence belongs to the Cu-Zn superoxide dismutase family. Homodimer. Cu cation is required as a cofactor. It depends on Zn(2+) as a cofactor.

It is found in the cytoplasm. The enzyme catalyses 2 superoxide + 2 H(+) = H2O2 + O2. Its function is as follows. Destroys radicals which are normally produced within the cells and which are toxic to biological systems. The protein is Superoxide dismutase [Cu-Zn] (sodA) of Emericella nidulans (strain FGSC A4 / ATCC 38163 / CBS 112.46 / NRRL 194 / M139) (Aspergillus nidulans).